The following is a 287-amino-acid chain: Undecaprenyl-diphosphatase (287 aa).

8 consecutive transmembrane segments (helical) span residues 1 to 21 (MALWIAVLLGVVQGIFMFLPV), 49 to 69 (MILFNLVVHVGTLVSIVVVFA), 101 to 121 (LFLLGMLSVLFTGVVGLTLKA), 126 to 146 (VFANPWMIAFTLILTGALLFW), 160 to 180 (TGVGTATLIGVAQGFALMPGL), 203 to 223 (YSFFLAIPTICAATLLQAIEV), 232 to 252 (VSVAALITGFVVAAGVGIVSL), and 267 to 287 (FSFYVWALAAAILLGWIDLPI).

It belongs to the UppP family.

The protein localises to the cell inner membrane. The enzyme catalyses di-trans,octa-cis-undecaprenyl diphosphate + H2O = di-trans,octa-cis-undecaprenyl phosphate + phosphate + H(+). In terms of biological role, catalyzes the dephosphorylation of undecaprenyl diphosphate (UPP). Confers resistance to bacitracin. The protein is Undecaprenyl-diphosphatase of Halorhodospira halophila (strain DSM 244 / SL1) (Ectothiorhodospira halophila (strain DSM 244 / SL1)).